Reading from the N-terminus, the 485-residue chain is Heat stress transcription factor A-1d (485 aa).

Disordered regions lie at residues 1–34 and 126–149; these read MDVS…SSNA and RRKP…QNSS. Residues 35–129 mediate DNA binding; that stretch reads PPPFLSKTYD…LLQSITRRKP (95 aa). Positions 136 to 146 are enriched in low complexity; the sequence is GHQRSQHSNGQ. The segment at 152-218 is hydrophobic repeat HR-A/B; it reads ACVEVGKFGL…QLMSFLAKAV (67 aa). Disordered regions lie at residues 229–269 and 436–461; these read QQQN…GQIV and PVPD…DKTK. The Bipartite nuclear localization signal signature appears at 238 to 252; the sequence is NRRISDTSKKRRFKR. The segment covering 441 to 455 has biased composition (polar residues); sequence MDSTPVDNETEQEQN. The short motif at 472–480 is the Nuclear export signal element; it reads LLSPETLDL.

It belongs to the HSF family. Class A subfamily. Homotrimer. Interacts with HSP90-2. Exhibits temperature-dependent phosphorylation.

Its subcellular location is the cytoplasm. The protein localises to the nucleus. In terms of biological role, transcriptional regulator that specifically binds DNA sequence 5'-AGAAnnTTCT-3' known as heat shock promoter elements (HSE). The sequence is that of Heat stress transcription factor A-1d (HSFA1D) from Arabidopsis thaliana (Mouse-ear cress).